The chain runs to 954 residues: Protein teashirt (954 aa).

3 disordered regions span residues 20–91 (LPTA…SLPS), 167–207 (ESAE…PQLG), and 276–331 (VKGG…GSGA). Residues 47–57 (HGGGAGSGGVG) show a composition bias toward gly residues. Residues 292 to 303 (SKATTPQAASQP) are compositionally biased toward polar residues. Over residues 318–328 (SGGGSGGGAAG) the composition is skewed to gly residues. Residues 354–378 (FRCVWCKQSFPTLEALTTHMKDSKH) form a C2H2-type 1 zinc finger. The tract at residues 383–444 (VPPFGNLPSN…YRGDPPTPLP (62 aa)) is disordered. Residues 417–428 (SGSASNHSPSAN) are compositionally biased toward low complexity. 2 consecutive C2H2-type zinc fingers follow at residues 466–490 (LKCM…ETQH) and 533–557 (LTCK…KNNH). 3 disordered regions span residues 563–622 (LQSA…DKND), 689–714 (FDTP…TSPV), and 748–935 (TSSE…NLTA). The span at 568–578 (ARKRPAPKKRE) shows a compositional bias: basic residues. Over residues 579 to 588 (KSLPVRKLLE) the composition is skewed to basic and acidic residues. The span at 696–712 (ASLPASSPSNSSTKNTS) shows a compositional bias: low complexity. Residues Ser-750 and Ser-758 each carry the phosphoserine modification. Residues 778–807 (GHDEESSKPAIKQEREAESKPVKMEIKSEF) show a composition bias toward basic and acidic residues. Low complexity predominate over residues 842–851 (PKTPSSAASP). Polar residues-rich tracts occupy residues 862–885 (AESQ…GSSE) and 893–907 (DSLN…SLGS). The segment covering 910–926 (AGANSRAKLAAAAAAGG) has biased composition (low complexity).

The protein belongs to the teashirt C2H2-type zinc-finger protein family. As to quaternary structure, binds arm. As to expression, shows a dynamic expression pattern during embryogenesis. Expressed in the embryonic trunk region (PS 3-13) with expression strongest in the thoracic segments. Expressed in a small group of cells corresponding to the anal tuft from stage 14. Strongly expressed in the embryonic ventral nerve cord. Also expressed in the proximal domain of the leg imaginal disk and in the region of the wing disk that will give rise to the proximal wing hinge. Expressed at high levels in the anterior and central embryonic midgut mesoderm and in the embryonic midgut endoderm. Expressed at a low level in more posterior visceral mesoderm of the gut. From stage 12 onwards, tsh and tio are colocalized in some cells of the CNS, trunk epidermis, hindgut and Malpighian tubules.

It localises to the nucleus. It is found in the cytoplasm. Its function is as follows. Homeotic protein that acts downstream of Arm in the Wg cascade during embryogenesis to determine segment identity throughout the entire trunk. Acts cooperatively with other trunk homeotic proteins to repress head homeotic genes and therefore repress head segmental identity. Necessary, in combination with Scr, for the formation of the prothoracic segment. Promotes eye development in the dorsal region of the eye disk and suppresses eye development in the ventral region in combination with Wg-signaling and several early dorso-ventral eye patterning genes. Required for proper development of proximal leg segments. Has differential functions along the dorso-ventral axs of the antennal and leg disks. May play a role in wing hinge development. Possible involvement in chromatin structure for modulation of transcription. Binds DNA and can act as both a transcriptional repressor and activator. Positively regulates its own expression as well as that of Dll. Negatively regulates the expression of mod. Required for Wg-mediated transcriptional repression of Ubx in the midgut. Also represses transcription of lab in the midgut and is necessary for the proper formation of anterior and central midgut structures. Tiptop (tio) and teashirt (tsh) have, on the whole, common activities. Tio and tsh repress each other's expression and tsh has a crucial role for trunk patterning that is in part masked by ectopic expression of tiptop. Both genes share a common activity required for the activation of Ser and svb and the maintenance of en and wg. This is Protein teashirt (tsh) from Drosophila melanogaster (Fruit fly).